The sequence spans 406 residues: Cytochrome bc1 complex Rieske iron-sulfur subunit (406 aa).

3 helical membrane passes run 56–76, 98–118, and 166–186; these read VGIWFGIGIVSALAFLAVYLF, LLGLTSGLAILSLGIGVIFYI, and MLGIGGVLAGLTIIAPLGGMV. One can recognise a Rieske domain in the interval 291–388; it reads HGPRNAVMLI…ITVDEEGYLV (98 aa). Positions 331, 333, 350, and 353 each coordinate [2Fe-2S] cluster. An intrachain disulfide couples C336 to C352.

The protein belongs to the Rieske iron-sulfur protein family. In terms of assembly, the cytochrome bc1 complex is composed of a cytochrome b (QcrB), the Rieske iron-sulfur protein (QcrA) and a diheme cytochrome c (QcrC) subunit. The bc1 complex forms a supercomplex with cytochrome c oxidase (cytochrome aa3). Requires [2Fe-2S] cluster as cofactor.

It is found in the cell membrane. Iron-sulfur subunit of the cytochrome bc1 complex, an essential component of the respiratory electron transport chain required for ATP synthesis. The bc1 complex catalyzes the oxidation of menaquinol and the reduction of cytochrome c in the respiratory chain. The bc1 complex operates through a Q-cycle mechanism that couples electron transfer to generation of the proton gradient that drives ATP synthesis. This chain is Cytochrome bc1 complex Rieske iron-sulfur subunit (qcrA), found in Corynebacterium diphtheriae (strain ATCC 700971 / NCTC 13129 / Biotype gravis).